Here is an 878-residue protein sequence, read N- to C-terminus: Alanine--tRNA ligase (878 aa).

Positions 566, 570, 668, and 672 each coordinate Zn(2+).

Belongs to the class-II aminoacyl-tRNA synthetase family. Zn(2+) is required as a cofactor.

The protein resides in the cytoplasm. The catalysed reaction is tRNA(Ala) + L-alanine + ATP = L-alanyl-tRNA(Ala) + AMP + diphosphate. Catalyzes the attachment of alanine to tRNA(Ala) in a two-step reaction: alanine is first activated by ATP to form Ala-AMP and then transferred to the acceptor end of tRNA(Ala). Also edits incorrectly charged Ser-tRNA(Ala) and Gly-tRNA(Ala) via its editing domain. The sequence is that of Alanine--tRNA ligase from Geobacillus thermodenitrificans (strain NG80-2).